We begin with the raw amino-acid sequence, 613 residues long: Dihydroxy-acid dehydratase (613 aa).

Asp-81 serves as a coordination point for Mg(2+). [2Fe-2S] cluster is bound at residue Cys-122. Asp-123 and Lys-124 together coordinate Mg(2+). Lys-124 carries the N6-carboxylysine modification. Cys-195 provides a ligand contact to [2Fe-2S] cluster. Glu-491 serves as a coordination point for Mg(2+). Ser-517 (proton acceptor) is an active-site residue.

Belongs to the IlvD/Edd family. As to quaternary structure, homodimer. Requires [2Fe-2S] cluster as cofactor. Mg(2+) serves as cofactor.

It catalyses the reaction (2R)-2,3-dihydroxy-3-methylbutanoate = 3-methyl-2-oxobutanoate + H2O. It carries out the reaction (2R,3R)-2,3-dihydroxy-3-methylpentanoate = (S)-3-methyl-2-oxopentanoate + H2O. The protein operates within amino-acid biosynthesis; L-isoleucine biosynthesis; L-isoleucine from 2-oxobutanoate: step 3/4. Its pathway is amino-acid biosynthesis; L-valine biosynthesis; L-valine from pyruvate: step 3/4. Functionally, functions in the biosynthesis of branched-chain amino acids. Catalyzes the dehydration of (2R,3R)-2,3-dihydroxy-3-methylpentanoate (2,3-dihydroxy-3-methylvalerate) into 2-oxo-3-methylpentanoate (2-oxo-3-methylvalerate) and of (2R)-2,3-dihydroxy-3-methylbutanoate (2,3-dihydroxyisovalerate) into 2-oxo-3-methylbutanoate (2-oxoisovalerate), the penultimate precursor to L-isoleucine and L-valine, respectively. This chain is Dihydroxy-acid dehydratase, found in Hyphomonas neptunium (strain ATCC 15444).